The chain runs to 607 residues: Albumin (607 aa).

An N-terminal signal peptide occupies residues 1-18 (MKWVTFISLLLLFSSAYS). The propeptide occupies 19–24 (RGVFRR). Albumin domains lie at 19–209 (RGVF…DAMR), 210–402 (EKVL…KLKH), and 403–600 (LVDE…KLVA). His27 is a binding site for Cu cation. Residue Ser29 is modified to Phosphoserine. Ca(2+) contacts are provided by Glu30 and Asp37. A disulfide bridge connects residues Cys77 and Cys86. Ser82 and Ser89 each carry phosphoserine. His91 contacts Zn(2+). 6 disulfides stabilise this stretch: Cys99/Cys115, Cys114/Cys125, Cys147/Cys192, Cys191/Cys200, Cys223/Cys269, and Cys268/Cys276. Position 107 is a phosphothreonine (Thr107). Residue Lys228 is modified to N6-succinyllysine. Glu267 is a Ca(2+) binding site. Zn(2+)-binding residues include His270 and Asp272. The Ca(2+) site is built by Asp272, Glu275, Asp278, and Asp282. 8 cysteine pairs are disulfide-bonded: Cys288–Cys302, Cys301–Cys312, Cys339–Cys384, Cys383–Cys392, Cys415–Cys461, Cys460–Cys471, Cys484–Cys500, and Cys499–Cys510. The residue at position 296 (Ser296) is a Phosphoserine. Ser442 bears the Phosphoserine mark. Residues Thr443 and Thr445 each carry the phosphothreonine modification. Residue Lys459 is modified to N6-succinyllysine. Ser512 carries the phosphoserine modification. Intrachain disulfides connect Cys537/Cys582 and Cys581/Cys590. Lys557 carries the N6-methyllysine modification. Position 569 is a phosphothreonine (Thr569). N6-succinyllysine is present on Lys587.

Belongs to the ALB/AFP/VDB family. As to quaternary structure, interacts with FCGRT; this interaction regulates ALB homeostasis. Interacts with TASOR. In plasma, occurs in a covalently-linked complex with chromophore-bound alpha-1-microglobulin; this interaction does not prevent fatty acid binding to ALB. In terms of processing, phosphorylated by FAM20C in the extracellular medium. In terms of tissue distribution, plasma.

The protein resides in the secreted. Its function is as follows. Binds water, Ca(2+), Na(+), K(+), fatty acids, hormones, bilirubin and drugs. Its main function is the regulation of the colloidal osmotic pressure of blood. Major zinc transporter in plasma, typically binds about 80% of all plasma zinc. Major calcium and magnesium transporter in plasma, binds approximately 45% of circulating calcium and magnesium in plasma. Potentially has more than two calcium-binding sites and might additionally bind calcium in a non-specific manner. The shared binding site between zinc and calcium at residue Asp-272 suggests a crosstalk between zinc and calcium transport in the blood. The rank order of affinity is zinc &gt; calcium &gt; magnesium. Binds to the bacterial siderophore enterobactin and inhibits enterobactin-mediated iron uptake of E.coli from ferric transferrin, and may thereby limit the utilization of iron and growth of enteric bacteria such as E.coli. Does not prevent iron uptake by the bacterial siderophore aerobactin. The chain is Albumin (ALB) from Ovis aries (Sheep).